The following is a 267-amino-acid chain: 4-hydroxy-tetrahydrodipicolinate reductase (267 aa).

NAD(+)-binding positions include 8–13 (GIAGRM), Glu-34, 98–100 (GST), and 122–125 (SPNM). The active-site Proton donor/acceptor is His-155. Residue His-156 coordinates (S)-2,3,4,5-tetrahydrodipicolinate. Lys-159 serves as the catalytic Proton donor. 165-166 (GT) contacts (S)-2,3,4,5-tetrahydrodipicolinate.

The protein belongs to the DapB family.

The protein localises to the cytoplasm. The enzyme catalyses (S)-2,3,4,5-tetrahydrodipicolinate + NAD(+) + H2O = (2S,4S)-4-hydroxy-2,3,4,5-tetrahydrodipicolinate + NADH + H(+). The catalysed reaction is (S)-2,3,4,5-tetrahydrodipicolinate + NADP(+) + H2O = (2S,4S)-4-hydroxy-2,3,4,5-tetrahydrodipicolinate + NADPH + H(+). It participates in amino-acid biosynthesis; L-lysine biosynthesis via DAP pathway; (S)-tetrahydrodipicolinate from L-aspartate: step 4/4. In terms of biological role, catalyzes the conversion of 4-hydroxy-tetrahydrodipicolinate (HTPA) to tetrahydrodipicolinate. The polypeptide is 4-hydroxy-tetrahydrodipicolinate reductase (Syntrophobacter fumaroxidans (strain DSM 10017 / MPOB)).